The primary structure comprises 274 residues: Lipid phosphate phosphatase 1 (274 aa).

Over 1-15 (MISVMADEKHKEYFK) the chain is Lumenal. A helical transmembrane segment spans residues 16-33 (LYYFQYMIIGLCTILFLY). Residues 34-69 (SEISLVPRGQNIEFSLDDPSISKRYVPNELVGPLEC) are Cytoplasmic-facing. The chain crosses the membrane as a helical span at residues 70-87 (LILSVGLSNMVVFWTCMF). Residues 88-117 (DKDLLKKNRVKRLRERPDGISNDFHFMHTS) are Lumenal-facing. Residues 118–139 (ILCLMLIISINAALTGALKLII) traverse the membrane as a helical segment. Positions 136–144 (KLIIGNLRP) are phosphatase sequence motif I. Residues 140-189 (GNLRPDFVDRCIPDLQKMSDSDSLVFGLDICKQTNKWILYEGLKSTPSGH) lie on the Cytoplasmic side of the membrane. The segment at 186–189 (PSGH) is phosphatase sequence motif II. A helical transmembrane segment spans residues 190-203 (SSFIVSTMGFTYLW). Over 204–214 (QRVFTTRNTRS) the chain is Lumenal. A helical transmembrane segment spans residues 215-231 (CIWCPLLALVVMVSRVI). Residues 228–239 (SRVIDHRHHWYD) are phosphatase sequence motif III. The Cytoplasmic segment spans residues 232–237 (DHRHHW). Residues 238 to 255 (YDVVSGAVLAFLVIYCCW) form a helical membrane-spanning segment. The Lumenal segment spans residues 256–274 (KWTFTNLAKRDILPSPVSV).

It belongs to the PA-phosphatase related phosphoesterase family.

Its subcellular location is the golgi apparatus membrane. It catalyses the reaction a 1,2-diacyl-sn-glycerol 3-diphosphate + H2O = a 1,2-diacyl-sn-glycero-3-phosphate + phosphate + H(+). The enzyme catalyses a 1,2-diacyl-sn-glycero-3-phosphate + H2O = a 1,2-diacyl-sn-glycerol + phosphate. The catalysed reaction is a 1-acyl-sn-glycero-3-phosphate + H2O = a 1-acyl-sn-glycerol + phosphate. Its activity is regulated as follows. PA phosphatase activity is magnesium ion-independent and potently inhibited by N-ethylmaleimide. Also inhibited by phenylglyoxal and propranolol. Catalyzes the dephosphorylation of diacylglycerol diphosphate (DGPP) to phosphatidate (PA) and the subsequent dephosphorylation of PA to diacylglycerol (DAG). Together with DPP1, regulates intracellular DGPP and PA levels which are phospholipid molecules believed to play a signaling role in stress response. Can also use lysophosphatidic acid (LPA) as a substrate. Substrate preference is PA &gt; DGPP &gt; LPA. The polypeptide is Lipid phosphate phosphatase 1 (LPP1) (Saccharomyces cerevisiae (strain ATCC 204508 / S288c) (Baker's yeast)).